Consider the following 395-residue polypeptide: Argininosuccinate synthase (395 aa).

ATP-binding positions include 6–14 (AYSGGLDTS) and Ala33. Tyr84 is an L-citrulline binding site. Position 114 (Gly114) interacts with ATP. The L-aspartate site is built by Thr116, Asn120, and Asp121. Asn120 provides a ligand contact to L-citrulline. Arg124, Ser173, Ser182, Glu258, and Tyr270 together coordinate L-citrulline.

The protein belongs to the argininosuccinate synthase family. Type 1 subfamily. Homotetramer.

It is found in the cytoplasm. It catalyses the reaction L-citrulline + L-aspartate + ATP = 2-(N(omega)-L-arginino)succinate + AMP + diphosphate + H(+). It participates in amino-acid biosynthesis; L-arginine biosynthesis; L-arginine from L-ornithine and carbamoyl phosphate: step 2/3. This Rhodococcoides fascians (Rhodococcus fascians) protein is Argininosuccinate synthase.